The chain runs to 76 residues: Protein MATERNALLY EXPRESSED GENE 4 (76 aa).

An N-terminal signal peptide occupies residues 1–27 (MEYRKRVDALVFFSLLLLGYFAAHAHG). A disulfide bond links C53 and C75.

Belongs to the MEG family. In terms of tissue distribution, expressed exclusively in endosperm.

This is Protein MATERNALLY EXPRESSED GENE 4 (MEG4) from Zea mays (Maize).